The following is a 206-amino-acid chain: Ribosome maturation factor RimP (206 aa).

Positions 164-206 (GGIPEGRAVPSDAVDLTDDSGVDSVEDDEAELEDVENEEGFDK) are disordered. Acidic residues predominate over residues 178–206 (DLTDDSGVDSVEDDEAELEDVENEEGFDK).

Belongs to the RimP family.

It is found in the cytoplasm. Its function is as follows. Required for maturation of 30S ribosomal subunits. The sequence is that of Ribosome maturation factor RimP from Rhodococcus erythropolis (strain PR4 / NBRC 100887).